Here is a 308-residue protein sequence, read N- to C-terminus: Aspartate carbamoyltransferase catalytic subunit (308 aa).

Residues R58 and T59 each contribute to the carbamoyl phosphate site. L-aspartate is bound at residue K86. Residues R108, H136, and Q139 each coordinate carbamoyl phosphate. L-aspartate contacts are provided by R169 and R222. 2 residues coordinate carbamoyl phosphate: G264 and P265.

It belongs to the aspartate/ornithine carbamoyltransferase superfamily. ATCase family. Heterododecamer (2C3:3R2) of six catalytic PyrB chains organized as two trimers (C3), and six regulatory PyrI chains organized as three dimers (R2).

It carries out the reaction carbamoyl phosphate + L-aspartate = N-carbamoyl-L-aspartate + phosphate + H(+). It functions in the pathway pyrimidine metabolism; UMP biosynthesis via de novo pathway; (S)-dihydroorotate from bicarbonate: step 2/3. Functionally, catalyzes the condensation of carbamoyl phosphate and aspartate to form carbamoyl aspartate and inorganic phosphate, the committed step in the de novo pyrimidine nucleotide biosynthesis pathway. This is Aspartate carbamoyltransferase catalytic subunit from Campylobacter hominis (strain ATCC BAA-381 / DSM 21671 / CCUG 45161 / LMG 19568 / NCTC 13146 / CH001A).